The primary structure comprises 446 residues: Mycosin-1 (446 aa).

The N-terminal stretch at 1–21 (MHRIFLITVALALLTASPASA) is a signal peptide. The disordered stretch occupies residues 24-43 (PPPIDPGALPPDVTGPDQPT). Positions 64–387 (PWSNTYLGVA…AGVIDAVAAL (324 aa)) constitute a Peptidase S8 domain. Residues Asp90, His121, and Ser332 each act as charge relay system in the active site. A helical transmembrane segment spans residues 419–439 (ITAVALVAVGLTLALGLGALA).

Belongs to the peptidase S8 family.

It is found in the cell membrane. Functionally, may play a dual role in regulation of ESX-1 secretion and virulence. Acts as a protease that cleaves EspB. Essential for ESX-1 function, required for early replication in macrophages and full virulence in mice. The polypeptide is Mycosin-1 (Mycobacterium tuberculosis (strain ATCC 25618 / H37Rv)).